Consider the following 422-residue polypeptide: Nucleoside transporter 1 (422 aa).

Over 1–38 (MSTGKESSKAYADIESRGDYKDDGKKGSTLSSKQHFML) the chain is Cytoplasmic. The helical transmembrane segment at 39 to 59 (SLTFILIGLSSLNVWNTALGL) threads the bilayer. Residue W53 coordinates inosine. At 60–63 (NINF) the chain is on the extracellular side. A helical transmembrane segment spans residues 64–82 (KYNTFQITGLVCSSIVALF). Residues 83-87 (VEIPK) lie on the Cytoplasmic side of the membrane. The chain crosses the membrane as a helical span at residues 88-107 (IMLPFLLGGLSILCAGFQIS). Residues 108–116 (HSFFTDTQF) lie on the Extracellular side of the membrane. A helical transmembrane segment spans residues 117–139 (DTYCLVAFIVIGVVAGLAQTIAF). Inosine is bound at residue Q135. Topologically, residues 140–149 (NIGSTMEDNM) are cytoplasmic. Residues 150 to 174 (GGYMSAGIGISGVFIFVINLLLDQF) form a helical membrane-spanning segment. Residues 175–185 (VSPEKHYGVNK) lie on the Extracellular side of the membrane. Residues 186 to 208 (AKLLYLYIICELCLILAIVFCVC) form a helical membrane-spanning segment. Topologically, residues 209-241 (NLDLTNKNNKKDEENKENNATLSYMELFKDSYK) are cytoplasmic. A helical transmembrane segment spans residues 242–265 (AILTMFLVNWLTLQLFPGVGHKKW). The Extracellular segment spans residues 266-274 (QESHNISDY). Residues 275-294 (NVTIIVGMFQVFDFLSRYPP) traverse the membrane as a helical segment. Residues D287 and R291 each coordinate inosine. Residues 295 to 309 (NLTHIKIFKNFTFSL) lie on the Cytoplasmic side of the membrane. Residues 310-330 (NKLLVANSLRLLFIPWFILNA) form a helical membrane-spanning segment. At 331 to 338 (CVDHPFFK) the chain is on the extracellular side. The helical transmembrane segment at 339-362 (NIVQQCVCMAMLAFTNGWFNTVPF) threads the bilayer. The Cytoplasmic portion of the chain corresponds to 363-374 (LVFVKELKKAKK). Residues 375–397 (KKEIEIISTFLVIAMFVGLFCGI) traverse the membrane as a helical segment. Residues 398–422 (WTTYIYNLFNIVLPKPDLPPIDVTQ) lie on the Extracellular side of the membrane.

Belongs to the SLC29A/ENT transporter (TC 2.A.57) family.

It localises to the cell membrane. The enzyme catalyses inosine(in) = inosine(out). It catalyses the reaction adenosine(in) = adenosine(out). The catalysed reaction is hypoxanthine(out) = hypoxanthine(in). It carries out the reaction guanosine(in) = guanosine(out). The enzyme catalyses guanine(out) = guanine(in). It catalyses the reaction thymidine(in) = thymidine(out). The catalysed reaction is uridine(out) = uridine(in). It carries out the reaction uracil(in) = uracil(out). The enzyme catalyses thymine(out) = thymine(in). It catalyses the reaction adenine(out) = adenine(in). The catalysed reaction is cytosine(out) = cytosine(in). It carries out the reaction xanthine(out) = xanthine(in). Its activity is regulated as follows. GSK4 (5-methyl-N-[2-(2-oxo-1-azepanyl)ethyl]-2-phenyl-1,3-oxazole-4-carbox-amide) disrupts the transport activity at 500 nM. Inhibited partially by 10 uM dipyridamole. Inhibited partially by N,N'-1,3-benzothiazole-2,6-diyldi(2-furamide), 2-bromo-N-(4-[1,3]oxazolo[4,5-b]pyridin-2-ylphenyl)benzamide, 4-methyl-7-[(3,4,5-trimethoxybenzyl)oxy]-2H-chromen-2-one, 2-(1-methyl-1H-indol-3-yl)-2-oxo-N-[4-(pyrrolidin-1-ylcarbonyl)phenyl]acet amide and 2-[2-(2-methylphenyl)vinyl]-4(3H)-quinazolinone. Functionally, sodium-independent nucleoside and nucleobase transporter with a broad substrate specificity. Plays a key role in the utilization of host purine sources by P.falciparum during intraerythrocytic development enabling parasite growth in the presence of physiological concentrations of adenosine, inosine, guanine, guanosine, xanthine and hypoxanthine. Essential for parasite transition from ring to trophozoite or from trophozoite to schizont stage but not for erythrocyte invasion by merozoites. This chain is Nucleoside transporter 1, found in Plasmodium falciparum (isolate 3D7).